A 319-amino-acid polypeptide reads, in one-letter code: Aspartate carbamoyltransferase catalytic subunit (319 aa).

Residues Arg-64 and Thr-65 each coordinate carbamoyl phosphate. Lys-92 provides a ligand contact to L-aspartate. Carbamoyl phosphate-binding residues include Arg-114, His-142, and Gln-145. Residues Arg-175 and Arg-229 each coordinate L-aspartate. The carbamoyl phosphate site is built by Gly-270 and Pro-271.

This sequence belongs to the aspartate/ornithine carbamoyltransferase superfamily. ATCase family. In terms of assembly, heterododecamer (2C3:3R2) of six catalytic PyrB chains organized as two trimers (C3), and six regulatory PyrI chains organized as three dimers (R2).

The enzyme catalyses carbamoyl phosphate + L-aspartate = N-carbamoyl-L-aspartate + phosphate + H(+). The protein operates within pyrimidine metabolism; UMP biosynthesis via de novo pathway; (S)-dihydroorotate from bicarbonate: step 2/3. Its function is as follows. Catalyzes the condensation of carbamoyl phosphate and aspartate to form carbamoyl aspartate and inorganic phosphate, the committed step in the de novo pyrimidine nucleotide biosynthesis pathway. The polypeptide is Aspartate carbamoyltransferase catalytic subunit (Rhodospirillum rubrum (strain ATCC 11170 / ATH 1.1.1 / DSM 467 / LMG 4362 / NCIMB 8255 / S1)).